A 390-amino-acid chain; its full sequence is Deoxyhypusine synthase-like protein (390 aa).

Belongs to the deoxyhypusine synthase family.

This Nostoc punctiforme (strain ATCC 29133 / PCC 73102) protein is Deoxyhypusine synthase-like protein.